The chain runs to 369 residues: UDP-N-acetylglucosamine--N-acetylmuramyl-(pentapeptide) pyrophosphoryl-undecaprenol N-acetylglucosamine transferase (369 aa).

Residues 16 to 18 (TGG), N130, R171, S203, I253, and Q298 each bind UDP-N-acetyl-alpha-D-glucosamine.

Belongs to the glycosyltransferase 28 family. MurG subfamily.

It localises to the cell inner membrane. The enzyme catalyses di-trans,octa-cis-undecaprenyl diphospho-N-acetyl-alpha-D-muramoyl-L-alanyl-D-glutamyl-meso-2,6-diaminopimeloyl-D-alanyl-D-alanine + UDP-N-acetyl-alpha-D-glucosamine = di-trans,octa-cis-undecaprenyl diphospho-[N-acetyl-alpha-D-glucosaminyl-(1-&gt;4)]-N-acetyl-alpha-D-muramoyl-L-alanyl-D-glutamyl-meso-2,6-diaminopimeloyl-D-alanyl-D-alanine + UDP + H(+). The protein operates within cell wall biogenesis; peptidoglycan biosynthesis. In terms of biological role, cell wall formation. Catalyzes the transfer of a GlcNAc subunit on undecaprenyl-pyrophosphoryl-MurNAc-pentapeptide (lipid intermediate I) to form undecaprenyl-pyrophosphoryl-MurNAc-(pentapeptide)GlcNAc (lipid intermediate II). This chain is UDP-N-acetylglucosamine--N-acetylmuramyl-(pentapeptide) pyrophosphoryl-undecaprenol N-acetylglucosamine transferase, found in Cytophaga hutchinsonii (strain ATCC 33406 / DSM 1761 / CIP 103989 / NBRC 15051 / NCIMB 9469 / D465).